The primary structure comprises 510 residues: Light-independent protochlorophyllide reductase subunit B (510 aa).

Asp36 contributes to the [4Fe-4S] cluster binding site. Asp297 functions as the Proton donor in the catalytic mechanism. Position 432 to 433 (432 to 433 (GM)) interacts with substrate.

The protein belongs to the ChlB/BchB/BchZ family. Protochlorophyllide reductase is composed of three subunits; ChlL, ChlN and ChlB. Forms a heterotetramer of two ChlB and two ChlN subunits. Requires [4Fe-4S] cluster as cofactor.

It localises to the plastid. The protein localises to the chloroplast. The enzyme catalyses chlorophyllide a + oxidized 2[4Fe-4S]-[ferredoxin] + 2 ADP + 2 phosphate = protochlorophyllide a + reduced 2[4Fe-4S]-[ferredoxin] + 2 ATP + 2 H2O. It participates in porphyrin-containing compound metabolism; chlorophyll biosynthesis (light-independent). Component of the dark-operative protochlorophyllide reductase (DPOR) that uses Mg-ATP and reduced ferredoxin to reduce ring D of protochlorophyllide (Pchlide) to form chlorophyllide a (Chlide). This reaction is light-independent. The NB-protein (ChlN-ChlB) is the catalytic component of the complex. The polypeptide is Light-independent protochlorophyllide reductase subunit B (Pinus thunbergii (Japanese black pine)).